Reading from the N-terminus, the 471-residue chain is Siroheme synthase 1 (471 aa).

Positions 1–203 (MDYLPLFAEL…GNSAEAEKAL (203 aa)) are precorrin-2 dehydrogenase /sirohydrochlorin ferrochelatase. NAD(+)-binding positions include 22–23 (EI) and 43–44 (ET). Serine 128 is subject to Phosphoserine. The tract at residues 215 to 471 (GEIILVGAGP…GFNASVVNLA (257 aa)) is uroporphyrinogen-III C-methyltransferase. Proline 224 contacts S-adenosyl-L-methionine. Residue aspartate 247 is the Proton acceptor of the active site. Lysine 269 acts as the Proton donor in catalysis. S-adenosyl-L-methionine contacts are provided by residues 300–302 (GGD), isoleucine 305, 330–331 (TA), methionine 382, and glycine 411.

The protein in the N-terminal section; belongs to the precorrin-2 dehydrogenase / sirohydrochlorin ferrochelatase family. This sequence in the C-terminal section; belongs to the precorrin methyltransferase family.

The catalysed reaction is uroporphyrinogen III + 2 S-adenosyl-L-methionine = precorrin-2 + 2 S-adenosyl-L-homocysteine + H(+). It catalyses the reaction precorrin-2 + NAD(+) = sirohydrochlorin + NADH + 2 H(+). The enzyme catalyses siroheme + 2 H(+) = sirohydrochlorin + Fe(2+). It participates in cofactor biosynthesis; adenosylcobalamin biosynthesis; precorrin-2 from uroporphyrinogen III: step 1/1. It functions in the pathway cofactor biosynthesis; adenosylcobalamin biosynthesis; sirohydrochlorin from precorrin-2: step 1/1. The protein operates within porphyrin-containing compound metabolism; siroheme biosynthesis; precorrin-2 from uroporphyrinogen III: step 1/1. Its pathway is porphyrin-containing compound metabolism; siroheme biosynthesis; siroheme from sirohydrochlorin: step 1/1. It participates in porphyrin-containing compound metabolism; siroheme biosynthesis; sirohydrochlorin from precorrin-2: step 1/1. Multifunctional enzyme that catalyzes the SAM-dependent methylations of uroporphyrinogen III at position C-2 and C-7 to form precorrin-2 via precorrin-1. Then it catalyzes the NAD-dependent ring dehydrogenation of precorrin-2 to yield sirohydrochlorin. Finally, it catalyzes the ferrochelation of sirohydrochlorin to yield siroheme. In Klebsiella pneumoniae subsp. pneumoniae (strain ATCC 700721 / MGH 78578), this protein is Siroheme synthase 1.